Reading from the N-terminus, the 245-residue chain is Hydrolase pyvD (245 aa).

Catalysis depends on residues C133, D179, and H211.

The protein belongs to the dienelactone hydrolase family.

The protein operates within secondary metabolite biosynthesis. Functionally, hydrolase; part of the gene cluster that mediates the biosynthesis of pyranoviolin A, a pyranonigrin analog with a C-3 methoxy group. Initially, the PKS portion of pyvA synthesizes C-10 carbon chain from 5 molecules of malonyl-CoA, which is then condensed with the thiolation (T) domain-bound glycine activated by the adenylation (A) domain. The subsequent chain release by Dieckmann condensation (DKC) could be catalyzed by the TE domain present at the C-terminus of pyvA and/or the alpha/beta hydrolase pyvD, installing the tetramic acid moiety. The FAD-dependent monooxygenase pyvC next epoxidizes one of the olefins of the polyketide part, and the epoxide ring-opening induces the dihydro-gamma-pyrone ring formation. The cytochrome P450 monooxygeanse pyvB would be responsible for the 2 consecutive reactions, in which the dihydro-gamma-pyrone is oxidized to gamma-pyrone and C-7 is hydroxylated to yield pyranonigrin F. Finally, the O-methyltransferase pyvH methylates the C-3 hydroxy group to complete the biosynthesis. This is Hydrolase pyvD from Aspergillus violaceofuscus (strain CBS 115571).